Consider the following 330-residue polypeptide: Cathepsin S (330 aa).

The N-terminal stretch at 1–17 (MKQLVCVLFVCSSAVTQ) is a signal peptide. A propeptide spans 18–114 (LHKDPTLDHH…ITYKSNPNQM (97 aa)) (activation peptide). N-linked (GlcNAc...) asparagine glycosylation occurs at asparagine 104. 4 cysteine pairs are disulfide-bonded: cysteine 126–cysteine 223, cysteine 136–cysteine 179, cysteine 170–cysteine 212, and cysteine 271–cysteine 319. Cysteine 139 is a catalytic residue. Residues histidine 277 and asparagine 297 contribute to the active site.

It belongs to the peptidase C1 family.

The protein resides in the lysosome. It localises to the secreted. It is found in the cytoplasmic vesicle. Its subcellular location is the phagosome. The catalysed reaction is Similar to cathepsin L, but with much less activity on Z-Phe-Arg-|-NHMec, and more activity on the Z-Val-Val-Arg-|-Xaa compound.. In terms of biological role, thiol protease. Key protease responsible for the removal of the invariant chain from MHC class II molecules and MHC class II antigen presentation. The bond-specificity of this proteinase is in part similar to the specificities of cathepsin L. The sequence is that of Cathepsin S (CTSS) from Saimiri boliviensis boliviensis (Bolivian squirrel monkey).